We begin with the raw amino-acid sequence, 2367 residues long: Probable G-protein coupled receptor 179 (2367 aa).

The signal sequence occupies residues 1-25; it reads MGTRGAVMPPPMWGLLGCCFVCAWA. Topologically, residues 26-381 are extracellular; it reads LGGPRPIRSL…CLVEEAAVLR (356 aa). The interval 62–245 is cache-like region; that stretch reads YLYSGDAQQL…CQEGRLRPGW (184 aa). An N-linked (GlcNAc...) asparagine glycan is attached at asparagine 75. Cysteine 76 and cysteine 236 are disulfide-bonded. N-linked (GlcNAc...) asparagine glycosylation occurs at asparagine 298. Residues 382–402 form a helical membrane-spanning segment; sequence AAVLACQACCMLAIFLSMLVS. Residues 403–415 are Cytoplasmic-facing; that stretch reads YRCRRNKRIWASG. Residues 416 to 436 form a helical membrane-spanning segment; it reads VVLLETVLFGFLLLYFPVFIL. Residues 437–444 lie on the Extracellular side of the membrane; it reads YFKPSVFR. The chain crosses the membrane as a helical span at residues 445-465; sequence CIALRWVRLLGFAIVYGTIIL. The cysteines at positions 445 and 537 are disulfide-linked. At 466–493 the chain is on the cytoplasmic side; it reads KLYRVLQLFLSRTAQRSALLSSGRLLRR. Residues 494-514 form a helical membrane-spanning segment; sequence LGLLLLPVLGFLAVWTVGALE. Residues 515–543 are Extracellular-facing; it reads RGIQHAPLVIRGHTPSGRHFYLCHHDRWD. The chain crosses the membrane as a helical span at residues 544 to 564; it reads YIMVVAELLLLCWGSFLCYAT. Residues 565-575 lie on the Cytoplasmic side of the membrane; it reads RAVLSAFHEPR. A helical transmembrane segment spans residues 576 to 594; that stretch reads YMGIALHNELLLSAAFHTA. Over 595 to 607 the chain is Extracellular; that stretch reads RFVLVPSLHPDWT. A helical membrane pass occupies residues 608–628; it reads LLLFFFHTHSTVTTTLALIFI. Residues 629-2367 lie on the Cytoplasmic side of the membrane; it reads PKFWKLGAPP…PPTVYPWDWE (1739 aa). 12 disordered regions span residues 731–818, 869–932, 1039–1083, 1098–1198, 1247–1431, 1537–1557, 1577–1672, 1723–1757, 1823–1852, 1886–2108, 2133–2212, and 2308–2367; these read ARQH…FRSA, REER…PHPP, KSRA…QQGS, RSTY…AGKT, EVTE…CPWE, PRES…SSKA, DLRP…ERPQ, AIRK…PTPE, SEGT…KGRL, AQAP…GSVE, WEAG…KEAG, and GVRE…WDWE. A compositionally biased stretch (low complexity) spans 738–759; that stretch reads SGSPGHGSLPGSSRRRLLSSSL. Over residues 773–782 the composition is skewed to basic and acidic residues; it reads STYDQRREQD. Over residues 1039–1067 the composition is skewed to basic and acidic residues; the sequence is KSRAGENEMDAEDAHHQREANDVDEDRPK. Over residues 1153–1164 the composition is skewed to polar residues; sequence LQNQQNAHTSRM. Composition is skewed to basic and acidic residues over residues 1171 to 1181, 1277 to 1299, 1341 to 1362, and 1390 to 1407; these read EGSREQEDRGR, RALR…KSEP, GRIR…EKPG, and EDGK…QEKQ. The span at 1615–1639 shows a compositional bias: basic and acidic residues; sequence ESQKDKEKMPGKSEIEDVTAWEKPE. Composition is skewed to basic and acidic residues over residues 1840 to 1851, 1903 to 1920, 1970 to 1979, 2023 to 2054, 2061 to 2070, and 2165 to 2180; these read AEQREKALEKGR, AEGH…RQDP, SHLDRQRPDQ, VTER…KSEP, KKPEMADFRQ, and TEEH…REQE. Residues 2326–2340 are compositionally biased toward low complexity; it reads PEPSLQEAESQSSSL.

It belongs to the G-protein coupled receptor 3 family. Homodimer. Associates with the R7 group RGS-GNB5 complexes, composed of an R7 group RGS subunit (RGS6, RGS7, RGS9 or RGS11) and GNB5, promoting their localization to the cell membrane and regulating the GTPase activator activity of R7 RGS proteins. Interacts with TRPM1. Interacts with GRM6. Interacts with EGFLAM; transsynaptic interaction is required for synaptic organization of photoreceptor cells. As to expression, expressed in the retina.

The protein resides in the cell membrane. The protein localises to the postsynaptic cell membrane. It localises to the cell projection. Its subcellular location is the dendrite. Orphan receptor involved in vision. Required for signal transduction through retinal depolarizing bipolar cells. Acts as an atypical G-protein coupled receptor that recruits and regulates the R7 group RGS-GNB5 complexes instead of activating G proteins: promotes the GTPase activator activity of R7 RGS proteins, increasing the GTPase activity of G protein alpha subunits, thereby driving them into their inactive GDP-bound form. Associates with components of metabotropic signaling cascade in retina ON-bipolar neurons, such as TRPM1 and GRM6: may control the ability of the GRM6 cascade to gate TRPM1. This Homo sapiens (Human) protein is Probable G-protein coupled receptor 179.